Reading from the N-terminus, the 380-residue chain is Succinyl-diaminopimelate desuccinylase (380 aa).

Residue histidine 70 coordinates Zn(2+). Residue aspartate 72 is part of the active site. Aspartate 104 is a Zn(2+) binding site. The active-site Proton acceptor is glutamate 138. 3 residues coordinate Zn(2+): glutamate 139, glutamate 167, and histidine 353.

Belongs to the peptidase M20A family. DapE subfamily. In terms of assembly, homodimer. Zn(2+) is required as a cofactor. Co(2+) serves as cofactor.

The enzyme catalyses N-succinyl-(2S,6S)-2,6-diaminopimelate + H2O = (2S,6S)-2,6-diaminopimelate + succinate. The protein operates within amino-acid biosynthesis; L-lysine biosynthesis via DAP pathway; LL-2,6-diaminopimelate from (S)-tetrahydrodipicolinate (succinylase route): step 3/3. In terms of biological role, catalyzes the hydrolysis of N-succinyl-L,L-diaminopimelic acid (SDAP), forming succinate and LL-2,6-diaminopimelate (DAP), an intermediate involved in the bacterial biosynthesis of lysine and meso-diaminopimelic acid, an essential component of bacterial cell walls. This Ectopseudomonas mendocina (strain ymp) (Pseudomonas mendocina) protein is Succinyl-diaminopimelate desuccinylase.